The chain runs to 185 residues: Lactoylglutathione lyase (185 aa).

Residues methionine 1–glutamate 21 form a disordered region. The 148-residue stretch at isoleucine 27–leucine 174 folds into the VOC domain. Glutamine 30 and arginine 34 together coordinate substrate. Residue glutamine 30 coordinates Zn(2+). Glutamate 96 lines the Zn(2+) pocket. Residues asparagine 100, arginine 120, histidine 124, and lysine 154–methionine 155 each bind substrate. Histidine 124 contributes to the Zn(2+) binding site. Glutamate 170 serves as a coordination point for Zn(2+). The active-site Proton donor/acceptor is the glutamate 170.

This sequence belongs to the glyoxalase I family. Zn(2+) serves as cofactor.

It catalyses the reaction (R)-S-lactoylglutathione = methylglyoxal + glutathione. Its pathway is secondary metabolite metabolism; methylglyoxal degradation; (R)-lactate from methylglyoxal: step 1/2. Functionally, catalyzes the conversion of hemimercaptal, formed from methylglyoxal and glutathione, to S-lactoylglutathione. The sequence is that of Lactoylglutathione lyase (GLY I) from Brassica juncea (Indian mustard).